Consider the following 217-residue polypeptide: Adenylate kinase (217 aa).

10–15 provides a ligand contact to ATP; sequence GIGKGT. Positions 30–59 are NMP; that stretch reads ATGDIFRKNFKENTELGILIKKIIAQGLLV. AMP-binding positions include Thr31, Arg36, 57–59, 85–88, and Gln92; these read LLV and GFPR. The tract at residues 126-163 is LID; sequence GRRICPECGKVYHIENIPPKTPGICDKDQKTLIQREDD. Position 127 (Arg127) interacts with ATP. Residues Cys130 and Cys133 each coordinate Zn(2+). 136-137 contributes to the ATP binding site; the sequence is VY. Zn(2+) contacts are provided by Cys150 and Asp153. AMP contacts are provided by Arg160 and Arg171. An ATP-binding site is contributed by Gln199.

This sequence belongs to the adenylate kinase family. Monomer.

It is found in the cytoplasm. It catalyses the reaction AMP + ATP = 2 ADP. Its pathway is purine metabolism; AMP biosynthesis via salvage pathway; AMP from ADP: step 1/1. Its function is as follows. Catalyzes the reversible transfer of the terminal phosphate group between ATP and AMP. Plays an important role in cellular energy homeostasis and in adenine nucleotide metabolism. This is Adenylate kinase from Onion yellows phytoplasma (strain OY-M).